We begin with the raw amino-acid sequence, 293 residues long: Ribosomal RNA small subunit methyltransferase H (293 aa).

S-adenosyl-L-methionine-binding positions include 32–34, D51, F78, D99, and Q106; that span reads GGH. The tract at residues 274–293 is disordered; it reads DEIRENPASRSAKMRVARRL.

The protein belongs to the methyltransferase superfamily. RsmH family.

The protein localises to the cytoplasm. It catalyses the reaction cytidine(1402) in 16S rRNA + S-adenosyl-L-methionine = N(4)-methylcytidine(1402) in 16S rRNA + S-adenosyl-L-homocysteine + H(+). Functionally, specifically methylates the N4 position of cytidine in position 1402 (C1402) of 16S rRNA. The chain is Ribosomal RNA small subunit methyltransferase H from Sulfurihydrogenibium azorense (strain DSM 15241 / OCM 825 / Az-Fu1).